The primary structure comprises 658 residues: UvrABC system protein B (658 aa).

Residues 25–182 (DSIRSGNKFN…LKLVDMGYKR (158 aa)) form the Helicase ATP-binding domain. 38-45 (GVTGSGKT) provides a ligand contact to ATP. A Beta-hairpin motif is present at residues 91 to 114 (YYDYYQPEAYIPRQDLFIEKDSSI). In terms of domain architecture, Helicase C-terminal spans 433–596 (QVEVLFDRAK…TPRSASRNLE (164 aa)). Positions 623 to 658 (AKIVKELRKQMLEAAKNLEFEKAAALRDEIAKLREL) constitute a UVR domain.

The protein belongs to the UvrB family. Forms a heterotetramer with UvrA during the search for lesions. Interacts with UvrC in an incision complex.

Its subcellular location is the cytoplasm. In terms of biological role, the UvrABC repair system catalyzes the recognition and processing of DNA lesions. A damage recognition complex composed of 2 UvrA and 2 UvrB subunits scans DNA for abnormalities. Upon binding of the UvrA(2)B(2) complex to a putative damaged site, the DNA wraps around one UvrB monomer. DNA wrap is dependent on ATP binding by UvrB and probably causes local melting of the DNA helix, facilitating insertion of UvrB beta-hairpin between the DNA strands. Then UvrB probes one DNA strand for the presence of a lesion. If a lesion is found the UvrA subunits dissociate and the UvrB-DNA preincision complex is formed. This complex is subsequently bound by UvrC and the second UvrB is released. If no lesion is found, the DNA wraps around the other UvrB subunit that will check the other stand for damage. The sequence is that of UvrABC system protein B from Campylobacter fetus subsp. fetus (strain 82-40).